Consider the following 126-residue polypeptide: Gas vesicle protein J (126 aa).

Belongs to the gas vesicle GvpA family. Interacts with GvpA.

The protein resides in the gas vesicle. In terms of biological role, a minor component of the gas vesicle, might be involved in nucleating gas vesicle formation. Gas vesicles (GV) are hollow, gas filled proteinaceous nanostructures. During planktonic growth they allow positioning of the organism at a favorable depth for light or nutrient acquisition. The polypeptide is Gas vesicle protein J (Pseudanabaena galeata (strain PCC 6901)).